Consider the following 261-residue polypeptide: MIFVISPAKALDYETPPVTARFTTPDFLDDAAELIDILRTCTPADIAGLMSLSDKLASLNVARYATWSRPFAPDNAKQAILAFNGDVYEGLAATTLGEDGLAWAQDHLRILSGLYGVLRPLDLMQPYRLEMGTRLSNPRGKDLYAFWGERITTELNRLLDLERAAGREAVLVNLASEEYFKSVKPKLLKGRLVTPTFEDWKDGRYKIISFYAKRARGLMSRYAIERQLDEVEDLKAFDSDGYAFVAEASDEHSWVFRRRQD.

It belongs to the UPF0246 family.

The polypeptide is UPF0246 protein azo1887 (Azoarcus sp. (strain BH72)).